The chain runs to 286 residues: MKNVLSIQSHVIYGHAGNSAAVFPMQRLGINVWPLNTVQLSNHMQYGHWAGSAIDAAKMEQLVDGIAAIGVLKRCDAVLSGFLGSPPQARAAVEIVRTVKAMNPNAWYFCDPAMGQTGGIRPEPGVEEFIVEEVPALADGMSPNHTELQKLAGRRIETVAEAVDACRALIRRGPQIILVKHLHDRNSPADRFNMLAVTETEAWIGQRPLYAFPRHPVGVGDLTSAIFVACRLRGDSVRAAFEHTLAAVHAVVKATYDARRYELELVAAQDEIARPSEWFGAWVTDA.

Residues Ser9 and 44 to 45 each bind substrate; that span reads MQ. Positions 111, 147, and 180 each coordinate ATP. Asp221 contributes to the substrate binding site.

The protein belongs to the pyridoxine kinase family. PdxY subfamily. Homodimer. It depends on Mg(2+) as a cofactor.

The catalysed reaction is pyridoxal + ATP = pyridoxal 5'-phosphate + ADP + H(+). It functions in the pathway cofactor metabolism; pyridoxal 5'-phosphate salvage; pyridoxal 5'-phosphate from pyridoxal: step 1/1. Functionally, pyridoxal kinase involved in the salvage pathway of pyridoxal 5'-phosphate (PLP). Catalyzes the phosphorylation of pyridoxal to PLP. The polypeptide is Pyridoxal kinase PdxY (Burkholderia orbicola (strain AU 1054)).